Consider the following 313-residue polypeptide: Sororin-like protein 1 (313 aa).

The FGF motif motif lies at 44–46 (FGF). Residues 105 to 287 (ADENQQSVPT…NDNLKELTPG (183 aa)) are disordered. Polar residues predominate over residues 107-118 (ENQQSVPTVSIA). Over residues 123 to 134 (PELPPSSSPLLP) the composition is skewed to pro residues. The segment covering 135 to 154 (PNGSESSSPIPLSLLSTSSL) has biased composition (low complexity). Residues 155–170 (QQRKITPSNLSNTSKP) show a composition bias toward polar residues. Over residues 184–196 (HGHHLTRLRKKRR) the composition is skewed to basic residues. The span at 249-264 (EKKILKTYHSQDKDTA) shows a compositional bias: basic and acidic residues. Residues 288–310 (KKEYLKSIKKYFQDVDDYQLHVV) form a C-terminal Sororin domain region.

Belongs to the sororin family. In terms of assembly, interacts with Pds5 and Psm3.

The protein localises to the nucleus. Its function is as follows. Regulator of sister chromatid cohesion in mitosis stabilizing cohesin complex association with chromatin. Antagonizes the action of wpl1 which stimulates cohesin dissociation from chromatin. Cohesion ensures that chromosome partitioning is accurate in dividing cells and may play an important role in DNA repair. The protein is Sororin-like protein 1 of Schizosaccharomyces pombe (strain 972 / ATCC 24843) (Fission yeast).